The chain runs to 477 residues: Glutamate--tRNA ligase (477 aa).

A 'HIGH' region motif is present at residues 12–22 (PSPTGMFHVGG). Residues Cys106, Cys108, Cys128, and Asp130 each contribute to the Zn(2+) site. The 'KMSKS' region signature appears at 238–242 (KLSKR). Residue Lys241 coordinates ATP.

It belongs to the class-I aminoacyl-tRNA synthetase family. Glutamate--tRNA ligase type 1 subfamily. Monomer. Zn(2+) is required as a cofactor.

The protein resides in the cytoplasm. It carries out the reaction tRNA(Glu) + L-glutamate + ATP = L-glutamyl-tRNA(Glu) + AMP + diphosphate. In terms of biological role, catalyzes the attachment of glutamate to tRNA(Glu) in a two-step reaction: glutamate is first activated by ATP to form Glu-AMP and then transferred to the acceptor end of tRNA(Glu). The polypeptide is Glutamate--tRNA ligase (Thermobifida fusca (strain YX)).